A 522-amino-acid polypeptide reads, in one-letter code: Probable protein kinase UbiB (522 aa).

Residues 119-496 (SFDADPVASA…QRRTNRLLLT (378 aa)) enclose the Protein kinase domain. ATP contacts are provided by residues 125–133 (VASASIAQV) and Lys-147. The active-site Proton acceptor is Asp-282. The helical transmembrane segment at 494-514 (LLTVFYLIGGFVAGGLFAHWI) threads the bilayer.

This sequence belongs to the ABC1 family. UbiB subfamily.

The protein localises to the cell inner membrane. It participates in cofactor biosynthesis; ubiquinone biosynthesis [regulation]. Functionally, is probably a protein kinase regulator of UbiI activity which is involved in aerobic coenzyme Q (ubiquinone) biosynthesis. The protein is Probable protein kinase UbiB of Leptothrix cholodnii (strain ATCC 51168 / LMG 8142 / SP-6) (Leptothrix discophora (strain SP-6)).